The chain runs to 129 residues: Small ribosomal subunit protein uS11 (129 aa).

Belongs to the universal ribosomal protein uS11 family. In terms of assembly, part of the 30S ribosomal subunit. Interacts with proteins S7 and S18. Binds to IF-3.

Located on the platform of the 30S subunit, it bridges several disparate RNA helices of the 16S rRNA. Forms part of the Shine-Dalgarno cleft in the 70S ribosome. The protein is Small ribosomal subunit protein uS11 of Roseobacter denitrificans (strain ATCC 33942 / OCh 114) (Erythrobacter sp. (strain OCh 114)).